A 666-amino-acid chain; its full sequence is UvrABC system protein B (666 aa).

The Helicase ATP-binding domain maps to 25–412 (EQVQAGAPYQ…EEQIVEQVIR (388 aa)). 38 to 45 (GATGTGKT) contacts ATP. A Beta-hairpin motif is present at residues 91 to 114 (YYDYYQPEAYIPVTDTYIAKTASI). Positions 429–595 (QVDDLLAEIQ…PIIKRSSNAI (167 aa)) constitute a Helicase C-terminal domain. Residues 626–661 (PNLITQLEAQMKEAAKNLEFEEAAQYRDRIKKLRER) enclose the UVR domain.

This sequence belongs to the UvrB family. Forms a heterotetramer with UvrA during the search for lesions. Interacts with UvrC in an incision complex.

The protein localises to the cytoplasm. In terms of biological role, the UvrABC repair system catalyzes the recognition and processing of DNA lesions. A damage recognition complex composed of 2 UvrA and 2 UvrB subunits scans DNA for abnormalities. Upon binding of the UvrA(2)B(2) complex to a putative damaged site, the DNA wraps around one UvrB monomer. DNA wrap is dependent on ATP binding by UvrB and probably causes local melting of the DNA helix, facilitating insertion of UvrB beta-hairpin between the DNA strands. Then UvrB probes one DNA strand for the presence of a lesion. If a lesion is found the UvrA subunits dissociate and the UvrB-DNA preincision complex is formed. This complex is subsequently bound by UvrC and the second UvrB is released. If no lesion is found, the DNA wraps around the other UvrB subunit that will check the other stand for damage. This chain is UvrABC system protein B, found in Synechococcus sp. (strain ATCC 27144 / PCC 6301 / SAUG 1402/1) (Anacystis nidulans).